The chain runs to 83 residues: Putative membrane protein insertion efficiency factor (83 aa).

This sequence belongs to the UPF0161 family.

The protein resides in the cell membrane. Its function is as follows. Could be involved in insertion of integral membrane proteins into the membrane. The protein is Putative membrane protein insertion efficiency factor of Streptococcus thermophilus (strain ATCC BAA-250 / LMG 18311).